Reading from the N-terminus, the 390-residue chain is LIM/homeobox protein Lhx4 (390 aa).

2 consecutive LIM zinc-binding domains span residues 28–87 and 88–150; these read PQCA…RFGT and KCTA…AKQN. Residues 157 to 216 constitute a DNA-binding region (homeobox); the sequence is AKRPRTTITAKQLETLKNAYKNSPKPARHVREQLSSETGLDMRVVQVWFQNRRAKEKRLK. Residues 161 to 181 are interaction with DNA; sequence RTTITAKQLETLKNAYKNSPK. The interval 199–211 is interaction with 5-mCpG DNA; that stretch reads RVVQVWFQNRRAK. Disordered regions lie at residues 230–253 and 356–390; these read SVKR…GVSD and AGGP…HPPF.

The protein resides in the nucleus. May play a critical role in the development of respiratory control mechanisms and in the normal growth and maturation of the lung. Binds preferentially to methylated DNA. The polypeptide is LIM/homeobox protein Lhx4 (LHX4) (Homo sapiens (Human)).